Here is a 65-residue protein sequence, read N- to C-terminus: Prokaryotic ubiquitin-like protein Pup (65 aa).

The tract at residues 1 to 38 is disordered; it reads MANAQQQVFGGGGGDDAENNDAPQQGSGTQQVNVTGTD. The ARC ATPase binding stretch occupies residues 21-59; it reads DAPQQGSGTQQVNVTGTDDLLDEIDGLLETNAEEFVRSY. Polar residues predominate over residues 22–34; sequence APQQGSGTQQVNV. At Gln65 the chain carries Deamidated glutamine. Residue Gln65 forms an Isoglutamyl lysine isopeptide (Gln-Lys) (interchain with K-? in acceptor proteins) linkage.

It belongs to the prokaryotic ubiquitin-like protein family. Strongly interacts with the proteasome-associated ATPase ARC through a hydrophobic interface; the interacting region of Pup lies in its C-terminal half. There is one Pup binding site per ARC hexamer ring. In terms of processing, is modified by deamidation of its C-terminal glutamine to glutamate by the deamidase Dop, a prerequisite to the subsequent pupylation process.

Its pathway is protein degradation; proteasomal Pup-dependent pathway. In terms of biological role, protein modifier that is covalently attached to lysine residues of substrate proteins, thereby targeting them for proteasomal degradation. The tagging system is termed pupylation. This is Prokaryotic ubiquitin-like protein Pup from Corynebacterium urealyticum (strain ATCC 43042 / DSM 7109).